Reading from the N-terminus, the 521-residue chain is Glucose-1-phosphate adenylyltransferase small subunit, chloroplastic (521 aa).

The tract at residues 1-24 is disordered; sequence MAASIGALKSSPSSHNCINERRND. Residues 1–72 constitute a chloroplast transit peptide; sequence MAASIGALKS…RSPLIVSPKA (72 aa).

Belongs to the bacterial/plant glucose-1-phosphate adenylyltransferase family. In terms of assembly, heterotetramer.

Its subcellular location is the plastid. It is found in the chloroplast. The enzyme catalyses alpha-D-glucose 1-phosphate + ATP + H(+) = ADP-alpha-D-glucose + diphosphate. It participates in glycan biosynthesis; starch biosynthesis. Activated by 3'phosphoglycerate, inhibited by orthophosphate. Allosteric regulation. This protein plays a role in synthesis of starch. It catalyzes the synthesis of the activated glycosyl donor, ADP-glucose from Glc-1-P and ATP. The sequence is that of Glucose-1-phosphate adenylyltransferase small subunit, chloroplastic from Solanum lycopersicum (Tomato).